The chain runs to 254 residues: Persulfide dioxygenase ETHE1, mitochondrial (254 aa).

The transit peptide at 1–7 (MAEAVLR) directs the protein to the mitochondrion. Residues serine 14 and serine 19 each carry the phosphoserine modification. Lysine 66 carries the post-translational modification N6-acetyllysine. Fe cation contacts are provided by histidine 79, histidine 135, and aspartate 154. Lysine 172 bears the N6-acetyllysine; alternate mark. The residue at position 172 (lysine 172) is an N6-succinyllysine; alternate.

It belongs to the metallo-beta-lactamase superfamily. Glyoxalase II family. In terms of assembly, homodimer. Monomer. Interacts with TST. May interact with RELA. Fe(2+) serves as cofactor. In terms of tissue distribution, ubiquitously expressed.

The protein localises to the cytoplasm. Its subcellular location is the nucleus. It localises to the mitochondrion matrix. It catalyses the reaction S-sulfanylglutathione + O2 + H2O = sulfite + glutathione + 2 H(+). Its activity is regulated as follows. Glutathione increases enzyme activity. Functionally, sulfur dioxygenase that plays an essential role in hydrogen sulfide catabolism in the mitochondrial matrix. Hydrogen sulfide (H(2)S) is first oxidized by SQRDL, giving rise to cysteine persulfide residues. ETHE1 consumes molecular oxygen to catalyze the oxidation of the persulfide, once it has been transferred to a thiophilic acceptor, such as glutathione (R-SSH). Plays an important role in metabolic homeostasis in mitochondria by metabolizing hydrogen sulfide and preventing the accumulation of supraphysiological H(2)S levels that have toxic effects, due to the inhibition of cytochrome c oxidase. First described as a protein that can shuttle between the nucleus and the cytoplasm and suppress p53-induced apoptosis by sequestering the transcription factor RELA/NFKB3 in the cytoplasm and preventing its accumulation in the nucleus. The protein is Persulfide dioxygenase ETHE1, mitochondrial (ETHE1) of Homo sapiens (Human).